Reading from the N-terminus, the 331-residue chain is MNAPHTPHLNEAEAAAAVEANAAELGRRALTRREQKEAYENNKLFKRLVRQVGQAIGDYNMIEHGDKVMVCLSGGKDSYALLDILLRLRERAPIDFDIVAVNLDQKQPGFPEHVLPEYLTKIGVPFHIENQDTYSIVKRLVPEGKTTCSLCSRLRRGILYRVAGELGATKIALGHHRDDIVQTLLLNMFYGGKLKGMPPKLQSDDGKNIVIRPLAYAKETDLEKYAELREFPIIPCNLCGSQPNLKRAEMKALIRDWDKRFPGRVDNMFNALANVVPSHLMDARLFPFAGLRATGEADPNGDIAFDEDPCGTDASAPGGAKSVSIVQFDDL.

Residues Ser73 to Ser78 carry the PP-loop motif motif. [4Fe-4S] cluster is bound by residues Cys148, Cys151, and Cys239.

It belongs to the TtcA family. Homodimer. Requires Mg(2+) as cofactor. The cofactor is [4Fe-4S] cluster.

Its subcellular location is the cytoplasm. The enzyme catalyses cytidine(32) in tRNA + S-sulfanyl-L-cysteinyl-[cysteine desulfurase] + AH2 + ATP = 2-thiocytidine(32) in tRNA + L-cysteinyl-[cysteine desulfurase] + A + AMP + diphosphate + H(+). The protein operates within tRNA modification. Its function is as follows. Catalyzes the ATP-dependent 2-thiolation of cytidine in position 32 of tRNA, to form 2-thiocytidine (s(2)C32). The sulfur atoms are provided by the cysteine/cysteine desulfurase (IscS) system. This is tRNA-cytidine(32) 2-sulfurtransferase from Burkholderia mallei (strain NCTC 10247).